The following is a 298-amino-acid chain: Probable endonuclease 4 (298 aa).

9 residues coordinate Zn(2+): histidine 69, histidine 111, glutamate 146, aspartate 180, histidine 183, histidine 215, aspartate 228, histidine 230, and glutamate 260.

Belongs to the AP endonuclease 2 family. The cofactor is Zn(2+).

It carries out the reaction Endonucleolytic cleavage to 5'-phosphooligonucleotide end-products.. Its function is as follows. Endonuclease IV plays a role in DNA repair. It cleaves phosphodiester bonds at apurinic or apyrimidinic (AP) sites, generating a 3'-hydroxyl group and a 5'-terminal sugar phosphate. This chain is Probable endonuclease 4, found in Bacillus cereus (strain AH820).